Here is a 122-residue protein sequence, read N- to C-terminus: Large ribosomal subunit protein uL14 (122 aa).

It belongs to the universal ribosomal protein uL14 family. Part of the 50S ribosomal subunit. Forms a cluster with proteins L3 and L19. In the 70S ribosome, L14 and L19 interact and together make contacts with the 16S rRNA in bridges B5 and B8.

Functionally, binds to 23S rRNA. Forms part of two intersubunit bridges in the 70S ribosome. This Burkholderia multivorans (strain ATCC 17616 / 249) protein is Large ribosomal subunit protein uL14.